Here is a 320-residue protein sequence, read N- to C-terminus: Malate dehydrogenase (320 aa).

NAD(+) is bound by residues Gly-8–Gly-13 and Asp-33. Substrate is bound by residues Arg-82 and Arg-88. NAD(+) contacts are provided by residues Asn-95 and Ile-118–Asn-120. The substrate site is built by Asn-120 and Arg-151. Catalysis depends on His-175, which acts as the Proton acceptor.

Belongs to the LDH/MDH superfamily. MDH type 3 family.

The catalysed reaction is (S)-malate + NAD(+) = oxaloacetate + NADH + H(+). Its function is as follows. Catalyzes the reversible oxidation of malate to oxaloacetate. The sequence is that of Malate dehydrogenase from Pelagibacter ubique (strain HTCC1062).